A 211-amino-acid polypeptide reads, in one-letter code: Thiamine-phosphate synthase (211 aa).

Residues glutamine 37 to lysine 41 and asparagine 69 contribute to the 4-amino-2-methyl-5-(diphosphooxymethyl)pyrimidine site. Aspartate 70 and glutamate 89 together coordinate Mg(2+). Serine 108 provides a ligand contact to 4-amino-2-methyl-5-(diphosphooxymethyl)pyrimidine. A 2-[(2R,5Z)-2-carboxy-4-methylthiazol-5(2H)-ylidene]ethyl phosphate-binding site is contributed by threonine 134 to threonine 136. Position 137 (lysine 137) interacts with 4-amino-2-methyl-5-(diphosphooxymethyl)pyrimidine. 2-[(2R,5Z)-2-carboxy-4-methylthiazol-5(2H)-ylidene]ethyl phosphate-binding positions include glycine 163 and valine 183 to serine 184.

This sequence belongs to the thiamine-phosphate synthase family. Requires Mg(2+) as cofactor.

The enzyme catalyses 2-[(2R,5Z)-2-carboxy-4-methylthiazol-5(2H)-ylidene]ethyl phosphate + 4-amino-2-methyl-5-(diphosphooxymethyl)pyrimidine + 2 H(+) = thiamine phosphate + CO2 + diphosphate. It carries out the reaction 2-(2-carboxy-4-methylthiazol-5-yl)ethyl phosphate + 4-amino-2-methyl-5-(diphosphooxymethyl)pyrimidine + 2 H(+) = thiamine phosphate + CO2 + diphosphate. It catalyses the reaction 4-methyl-5-(2-phosphooxyethyl)-thiazole + 4-amino-2-methyl-5-(diphosphooxymethyl)pyrimidine + H(+) = thiamine phosphate + diphosphate. Its pathway is cofactor biosynthesis; thiamine diphosphate biosynthesis; thiamine phosphate from 4-amino-2-methyl-5-diphosphomethylpyrimidine and 4-methyl-5-(2-phosphoethyl)-thiazole: step 1/1. Its function is as follows. Condenses 4-methyl-5-(beta-hydroxyethyl)thiazole monophosphate (THZ-P) and 2-methyl-4-amino-5-hydroxymethyl pyrimidine pyrophosphate (HMP-PP) to form thiamine monophosphate (TMP). This Enterococcus faecalis (strain ATCC 700802 / V583) protein is Thiamine-phosphate synthase.